The following is a 581-amino-acid chain: Pentatricopeptide repeat-containing protein At3g56550 (581 aa).

PPR repeat units lie at residues 70–104, 106–140, 141–171, 172–206, 207–241, 242–272, 273–307, 308–338, and 344–378; these read STSD…SVSR, DLFT…GFLD, DAIV…MPVR, DLVS…GVCG, DSYT…RCES, CVFV…MRKR, DVLT…GVRP, NAIT…MSSQ, and NVKH…EDPV. The tract at residues 379 to 454 is type E motif; sequence LWRTLLGSCK…VPGWSWIEIG (76 aa). The interval 455 to 485 is type E(+) motif; that stretch reads DQVHKFVVDDKMHPESAVIYSELGEVINRAI. The segment at 486–581 is type DYW motif; sequence LAGYKPEDSN…DGICSCNDYW (96 aa).

Belongs to the PPR family. PCMP-H subfamily.

The chain is Pentatricopeptide repeat-containing protein At3g56550 (PCMP-H80) from Arabidopsis thaliana (Mouse-ear cress).